Consider the following 670-residue polypeptide: tRNA 5-methylaminomethyl-2-thiouridine biosynthesis bifunctional protein MnmC (670 aa).

The tract at residues 1 to 242 (MTFSVQHAEI…KRECLSGLKI (242 aa)) is tRNA (mnm(5)s(2)U34)-methyltransferase. The FAD-dependent cmnm(5)s(2)U34 oxidoreductase stretch occupies residues 269–670 (IGGGIASLCA…KKWLKGSKVE (402 aa)).

This sequence in the N-terminal section; belongs to the methyltransferase superfamily. tRNA (mnm(5)s(2)U34)-methyltransferase family. It in the C-terminal section; belongs to the DAO family. Requires FAD as cofactor.

It localises to the cytoplasm. It carries out the reaction 5-aminomethyl-2-thiouridine(34) in tRNA + S-adenosyl-L-methionine = 5-methylaminomethyl-2-thiouridine(34) in tRNA + S-adenosyl-L-homocysteine + H(+). Functionally, catalyzes the last two steps in the biosynthesis of 5-methylaminomethyl-2-thiouridine (mnm(5)s(2)U) at the wobble position (U34) in tRNA. Catalyzes the FAD-dependent demodification of cmnm(5)s(2)U34 to nm(5)s(2)U34, followed by the transfer of a methyl group from S-adenosyl-L-methionine to nm(5)s(2)U34, to form mnm(5)s(2)U34. This is tRNA 5-methylaminomethyl-2-thiouridine biosynthesis bifunctional protein MnmC from Haemophilus influenzae (strain PittGG).